The following is a 719-amino-acid chain: Acyl-coenzyme A oxidase (719 aa).

A Microbody targeting signal motif is present at residues 716 to 719 (APKI).

It belongs to the acyl-CoA oxidase family. FAD is required as a cofactor.

The protein localises to the peroxisome. The enzyme catalyses a 2,3-saturated acyl-CoA + O2 = a (2E)-enoyl-CoA + H2O2. It functions in the pathway lipid metabolism; peroxisomal fatty acid beta-oxidation. The chain is Acyl-coenzyme A oxidase (POX1) from Komagataella pastoris (Yeast).